The primary structure comprises 168 residues: Shikimate kinase (168 aa).

10 to 15 (CSGKST) lines the ATP pocket. Residue serine 14 participates in Mg(2+) binding. Substrate contacts are provided by aspartate 32, arginine 56, and glycine 78. Position 116 (arginine 116) interacts with ATP. Arginine 133 contacts substrate.

Belongs to the shikimate kinase family. In terms of assembly, monomer. The cofactor is Mg(2+).

The protein localises to the cytoplasm. The enzyme catalyses shikimate + ATP = 3-phosphoshikimate + ADP + H(+). Its pathway is metabolic intermediate biosynthesis; chorismate biosynthesis; chorismate from D-erythrose 4-phosphate and phosphoenolpyruvate: step 5/7. In terms of biological role, catalyzes the specific phosphorylation of the 3-hydroxyl group of shikimic acid using ATP as a cosubstrate. The chain is Shikimate kinase from Aquifex aeolicus (strain VF5).